The chain runs to 864 residues: Leucine--tRNA ligase (864 aa).

The 'HIGH' region signature appears at 42–52 (PYPSGKLHMGH). Residues 622–626 (KMSKS) carry the 'KMSKS' region motif. Lysine 625 lines the ATP pocket.

Belongs to the class-I aminoacyl-tRNA synthetase family.

The protein localises to the cytoplasm. It catalyses the reaction tRNA(Leu) + L-leucine + ATP = L-leucyl-tRNA(Leu) + AMP + diphosphate. The chain is Leucine--tRNA ligase from Cellvibrio japonicus (strain Ueda107) (Pseudomonas fluorescens subsp. cellulosa).